The sequence spans 157 residues: Ribosomal RNA large subunit methyltransferase H (157 aa).

S-adenosyl-L-methionine is bound by residues leucine 73, glycine 104, and 123–128; that span reads LGPLTL.

Belongs to the RNA methyltransferase RlmH family. As to quaternary structure, homodimer.

Its subcellular location is the cytoplasm. The catalysed reaction is pseudouridine(1915) in 23S rRNA + S-adenosyl-L-methionine = N(3)-methylpseudouridine(1915) in 23S rRNA + S-adenosyl-L-homocysteine + H(+). Its function is as follows. Specifically methylates the pseudouridine at position 1915 (m3Psi1915) in 23S rRNA. The chain is Ribosomal RNA large subunit methyltransferase H from Xylella fastidiosa (strain M23).